We begin with the raw amino-acid sequence, 627 residues long: Mitochondrial Rho GTPase 1 (627 aa).

One can recognise a Miro 1 domain in the interval 1-169 (MATVRICVCG…FFLCQKAVTH (169 aa)). The Cytoplasmic portion of the chain corresponds to 1–599 (MATVRICVCG…PRSNEEGPDR (599 aa)). GTP contacts are provided by residues 10-17 (GDESTGKS), 58-62 (DTSAR), and 114-117 (NKSD). 2 consecutive EF-hand domains span residues 185–220 (LCIN…CFDK) and 305–340 (AGYR…APGL). Residues Asp198, Asp200, Asp202, Tyr204, Glu209, Asp318, Asp320, Asp322, and Glu329 each contribute to the Ca(2+) site. In terms of domain architecture, Miro 2 spans 420 to 584 (RNVVLCYVLG…FVAYADAATT (165 aa)). Residues 429–436 (GASGAGKS), 465–469 (ELPGG), and 534–537 (LKAD) contribute to the GTP site. Residues 600-620 (TSLYIALGATACAGVAALTIW) form a helical; Anchor for type IV membrane protein membrane-spanning segment. The Mitochondrial intermembrane portion of the chain corresponds to 621–627 (RRATNAL).

This sequence belongs to the mitochondrial Rho GTPase family.

Its subcellular location is the mitochondrion outer membrane. Functionally, mitochondrial GTPase involved in mitochondrial trafficking. Probably involved in control of anterograde transport of mitochondria and their subcellular distribution. The chain is Mitochondrial Rho GTPase 1 (GEM1) from Gibberella zeae (strain ATCC MYA-4620 / CBS 123657 / FGSC 9075 / NRRL 31084 / PH-1) (Wheat head blight fungus).